Consider the following 206-residue polypeptide: uncharacterized protein (206 aa).

2 disordered regions span residues 38 to 88 (RLQQ…NKNA) and 160 to 206 (HQNT…SVQE). Residues 40–73 (QQQQQQQQQQQQNRTASSLQQPQQQQPISPPLFL) show a composition bias toward low complexity. The residue at position 68 (Ser-68) is a Phosphoserine. The span at 78 to 88 (TSENSNLNKNA) shows a compositional bias: polar residues. Low complexity predominate over residues 165–186 (SSSNPGSMSSSPPNSASSIFNS). The segment covering 192-206 (PYTSQSFNPLESVQE) has biased composition (polar residues).

It is found in the cytoplasm. This is an uncharacterized protein from Saccharomyces cerevisiae (strain ATCC 204508 / S288c) (Baker's yeast).